The sequence spans 786 residues: Protein RDM16 (786 aa).

Basic and acidic residues-rich tracts occupy residues 1–80 (MDKE…SRDR), 87–112 (RSHE…GARD), and 123–143 (NGER…KDAQ). Disordered stretches follow at residues 1–223 (MDKE…SANL), 255–283 (KKAT…STGT), 532–557 (RPIE…EQKK), and 616–642 (EREQ…KERK). Residues 145-164 (SEGSGATNPTSGVTMGASTY) are compositionally biased toward polar residues. Positions 165-176 (SSIPSEASAAPS) are enriched in low complexity. The segment covering 177–189 (QTLLTKVSSISTT) has biased composition (polar residues). Positions 190-203 (DENKASVVRSHEVP) are enriched in basic and acidic residues. The segment covering 268 to 283 (TRVPPSTTTPAVSTGT) has biased composition (low complexity). Positions 534-547 (IEPPAEAAPPPPQP) are enriched in pro residues.

It localises to the nucleus. Its subcellular location is the nucleoplasm. Its function is as follows. Functions in the RNA-directed DNA methylation (RdDM) pathway. Acts as a pre-mRNA splicing factor, likely by affecting Pol V transcripts. Affects DNA methylation of transposable elements (TEs) and preferentially influences NRPD1- and ROS1-targeted loci. This is Protein RDM16 from Arabidopsis thaliana (Mouse-ear cress).